The primary structure comprises 178 residues: ATP synthase subunit delta (178 aa).

Belongs to the ATPase delta chain family. F-type ATPases have 2 components, F(1) - the catalytic core - and F(0) - the membrane proton channel. F(1) has five subunits: alpha(3), beta(3), gamma(1), delta(1), epsilon(1). F(0) has three main subunits: a(1), b(2) and c(10-14). The alpha and beta chains form an alternating ring which encloses part of the gamma chain. F(1) is attached to F(0) by a central stalk formed by the gamma and epsilon chains, while a peripheral stalk is formed by the delta and b chains.

It is found in the cell membrane. Functionally, f(1)F(0) ATP synthase produces ATP from ADP in the presence of a proton or sodium gradient. F-type ATPases consist of two structural domains, F(1) containing the extramembraneous catalytic core and F(0) containing the membrane proton channel, linked together by a central stalk and a peripheral stalk. During catalysis, ATP synthesis in the catalytic domain of F(1) is coupled via a rotary mechanism of the central stalk subunits to proton translocation. Its function is as follows. This protein is part of the stalk that links CF(0) to CF(1). It either transmits conformational changes from CF(0) to CF(1) or is implicated in proton conduction. This chain is ATP synthase subunit delta, found in Lysinibacillus sphaericus (strain C3-41).